The sequence spans 130 residues: Abscisic acid and environmental stress-inducible protein TAS14 (130 aa).

The disordered stretch occupies residues 1-130; sequence MAQYGNQDQM…KIKDKIPGMH (130 aa). The span at 27–58 shows a compositional bias: gly residues; it reads QGTGTGGMMGGTGTGGMMGGTGGEYGTQGMGT. Composition is skewed to basic and acidic residues over residues 61–73 and 92–130; these read HHHEGQQQLRRSD and KEKIMEKMPGQHEGEYGQTTGEEKKGMMDKIKDKIPGMH.

It belongs to the plant dehydrin family.

This is Abscisic acid and environmental stress-inducible protein TAS14 (TAS14) from Solanum lycopersicum (Tomato).